The primary structure comprises 773 residues: 5-methyltetrahydropteroyltriglutamate--homocysteine methyltransferase (773 aa).

Residues 16–19 and Lys-116 contribute to the 5-methyltetrahydropteroyltri-L-glutamate site; that span reads RELK. L-homocysteine-binding positions include 437–439 and Glu-490; that span reads IGS. L-methionine-binding positions include 437-439 and Glu-490; that span reads IGS. Residues 521 to 522 and Trp-567 each bind 5-methyltetrahydropteroyltri-L-glutamate; that span reads RC. L-homocysteine is bound at residue Asp-605. Asp-605 serves as a coordination point for L-methionine. Glu-611 serves as a coordination point for 5-methyltetrahydropteroyltri-L-glutamate. Residues His-647, Cys-649, and Glu-671 each contribute to the Zn(2+) site. His-700 serves as the catalytic Proton donor. Zn(2+) is bound at residue Cys-732.

It belongs to the vitamin-B12 independent methionine synthase family. It depends on Zn(2+) as a cofactor.

It carries out the reaction 5-methyltetrahydropteroyltri-L-glutamate + L-homocysteine = tetrahydropteroyltri-L-glutamate + L-methionine. Its pathway is amino-acid biosynthesis; L-methionine biosynthesis via de novo pathway; L-methionine from L-homocysteine (MetE route): step 1/1. Catalyzes the transfer of a methyl group from 5-methyltetrahydrofolate to homocysteine resulting in methionine formation. This is 5-methyltetrahydropteroyltriglutamate--homocysteine methyltransferase from Alkalilimnicola ehrlichii (strain ATCC BAA-1101 / DSM 17681 / MLHE-1).